Consider the following 408-residue polypeptide: Cobalt-precorrin-5B C(1)-methyltransferase (408 aa).

This sequence belongs to the CbiD family.

It carries out the reaction Co-precorrin-5B + S-adenosyl-L-methionine = Co-precorrin-6A + S-adenosyl-L-homocysteine. It functions in the pathway cofactor biosynthesis; adenosylcobalamin biosynthesis; cob(II)yrinate a,c-diamide from sirohydrochlorin (anaerobic route): step 6/10. Its function is as follows. Catalyzes the methylation of C-1 in cobalt-precorrin-5B to form cobalt-precorrin-6A. The chain is Cobalt-precorrin-5B C(1)-methyltransferase from Clostridioides difficile (strain 630) (Peptoclostridium difficile).